Here is a 729-residue protein sequence, read N- to C-terminus: Phosphoribosylformylglycinamidine synthase subunit PurL (729 aa).

H54 is a catalytic residue. Residues Y57 and K96 each contribute to the ATP site. E98 lines the Mg(2+) pocket. Residues 99 to 102 (SHNH) and R121 contribute to the substrate site. The active-site Proton acceptor is H100. D122 contributes to the Mg(2+) binding site. Q245 serves as a coordination point for substrate. D273 contributes to the Mg(2+) binding site. A substrate-binding site is contributed by 317-319 (ETQ). Residues D495 and G532 each coordinate ATP. N533 is a Mg(2+) binding site. Position 535 (S535) interacts with substrate.

It belongs to the FGAMS family. As to quaternary structure, monomer. Part of the FGAM synthase complex composed of 1 PurL, 1 PurQ and 2 PurS subunits.

It is found in the cytoplasm. The enzyme catalyses N(2)-formyl-N(1)-(5-phospho-beta-D-ribosyl)glycinamide + L-glutamine + ATP + H2O = 2-formamido-N(1)-(5-O-phospho-beta-D-ribosyl)acetamidine + L-glutamate + ADP + phosphate + H(+). Its pathway is purine metabolism; IMP biosynthesis via de novo pathway; 5-amino-1-(5-phospho-D-ribosyl)imidazole from N(2)-formyl-N(1)-(5-phospho-D-ribosyl)glycinamide: step 1/2. In terms of biological role, part of the phosphoribosylformylglycinamidine synthase complex involved in the purines biosynthetic pathway. Catalyzes the ATP-dependent conversion of formylglycinamide ribonucleotide (FGAR) and glutamine to yield formylglycinamidine ribonucleotide (FGAM) and glutamate. The FGAM synthase complex is composed of three subunits. PurQ produces an ammonia molecule by converting glutamine to glutamate. PurL transfers the ammonia molecule to FGAR to form FGAM in an ATP-dependent manner. PurS interacts with PurQ and PurL and is thought to assist in the transfer of the ammonia molecule from PurQ to PurL. The protein is Phosphoribosylformylglycinamidine synthase subunit PurL of Staphylococcus aureus (strain Mu3 / ATCC 700698).